The primary structure comprises 297 residues: MLLGGTSAEREVSFNSGKAVLEALLKQGYNAHPIDPKEYNVANLKKDGFNRAFNILHGRGGEDGTMQGLLEQIGLPYTGCGVMASALTMDKMRTKMLWKAFGLPVADMKVVTRETFAELDPQAVVAKLGLPLMVKPSLEGSSVGLTKVKAVEELKSAVEYALKFDNTILIEEWLAGDELTVSVLDNQVLPAIRIVPEGEFYDYEAKYISDNTQYFCPAGLTPEREQELAILVKRAYDAVGCRGWSRIDVMCDAKGNFRLVEVNTNPGMTSHSLFPKSAATVGISFEQLVVKILELSL.

Positions 95-294 (KMLWKAFGLP…FEQLVVKILE (200 aa)) constitute an ATP-grasp domain. 125 to 180 (VAKLGLPLMVKPSLEGSSVGLTKVKAVEELKSAVEYALKFDNTILIEEWLAGDELT) serves as a coordination point for ATP. Mg(2+)-binding residues include Asp-248, Glu-261, and Asn-263.

This sequence belongs to the D-alanine--D-alanine ligase family. Mg(2+) serves as cofactor. Requires Mn(2+) as cofactor.

Its subcellular location is the cytoplasm. The enzyme catalyses 2 D-alanine + ATP = D-alanyl-D-alanine + ADP + phosphate + H(+). Its pathway is cell wall biogenesis; peptidoglycan biosynthesis. In terms of biological role, cell wall formation. The sequence is that of D-alanine--D-alanine ligase from Haemophilus influenzae (strain PittEE).